A 167-amino-acid polypeptide reads, in one-letter code: NAD(P)H-quinone oxidoreductase subunit I, chloroplastic (167 aa).

4Fe-4S ferredoxin-type domains lie at 55–84 (GRIH…VDWK) and 95–124 (LNYS…MTEE). Positions 64, 67, 70, 74, 104, 107, 110, and 114 each coordinate [4Fe-4S] cluster.

Belongs to the complex I 23 kDa subunit family. NDH is composed of at least 16 different subunits, 5 of which are encoded in the nucleus. The cofactor is [4Fe-4S] cluster.

The protein resides in the plastid. Its subcellular location is the chloroplast thylakoid membrane. It catalyses the reaction a plastoquinone + NADH + (n+1) H(+)(in) = a plastoquinol + NAD(+) + n H(+)(out). The enzyme catalyses a plastoquinone + NADPH + (n+1) H(+)(in) = a plastoquinol + NADP(+) + n H(+)(out). In terms of biological role, NDH shuttles electrons from NAD(P)H:plastoquinone, via FMN and iron-sulfur (Fe-S) centers, to quinones in the photosynthetic chain and possibly in a chloroplast respiratory chain. The immediate electron acceptor for the enzyme in this species is believed to be plastoquinone. Couples the redox reaction to proton translocation, and thus conserves the redox energy in a proton gradient. This Solanum tuberosum (Potato) protein is NAD(P)H-quinone oxidoreductase subunit I, chloroplastic.